The primary structure comprises 393 residues: MSENFKQMLAESGLPTEETQIRQEFERLTAEEGLITNTSRMSPFWRLITAIAVKPVKWLTDHLIAEILPNLFVKTAKDSWLQIQAWAVGLDFKAATKAEGVVHFTKESDVTDLTIKAGTVIQTERINDVIFRLIVTQETIIPKGVLRAPVPVIAEQAGANFNLAAGYYRILPESIAGVSAVENLEDWLTSPGADRETNDELRERYRTQFSSVGQHHIDSVYKGMIAKVAALSVDRIYFKHDAPRGPGTANAYLLLDTGVTSQPFIDKVNRYVRDEGFHGHGDDLICYAMPETKHNLTCAIYFQPSIFVGDVRKQEIVQQVENMIRCAFRENNNYGVTRTYPFTVLVGRNWARKFTTTSAKLHLSYGGKSTFKASYLFHAFSNYPSQSKSKGQK.

It belongs to the P2likevirus gpJ protein family.

It localises to the virion. Putative baseplate protein. In Haemophilus phage HP1 (strain HP1c1) (Bacteriophage HP1), this protein is Putative baseplate protein gp29.